The sequence spans 325 residues: tRNA dimethylallyltransferase (325 aa).

11–18 (GPTASGKS) is an ATP binding site. 13 to 18 (TASGKS) is a binding site for substrate. 2 interaction with substrate tRNA regions span residues 36-39 (DSMQ) and 160-164 (QRLIR).

It belongs to the IPP transferase family. In terms of assembly, monomer. The cofactor is Mg(2+).

It carries out the reaction adenosine(37) in tRNA + dimethylallyl diphosphate = N(6)-dimethylallyladenosine(37) in tRNA + diphosphate. In terms of biological role, catalyzes the transfer of a dimethylallyl group onto the adenine at position 37 in tRNAs that read codons beginning with uridine, leading to the formation of N6-(dimethylallyl)adenosine (i(6)A). This Rickettsia canadensis (strain McKiel) protein is tRNA dimethylallyltransferase.